Consider the following 158-residue polypeptide: MVTGGMASKWDQKGMDIAYEEAALGYKEGGVPIGGCLINNKDGSVLGRGHNMRFQKGSATLHGEISTLENCGRLEGKVYKDTTLYTTLSPCDMCTGAIIMYGIPRCVVGENVNFKSKGEKYLQTRGHEVVVVDDERCKKIMKQFIDERPQDWFEDIGE.

A CMP/dCMP-type deaminase domain is found at 9–129 (KWDQKGMDIA…KYLQTRGHEV (121 aa)). N51 contributes to the substrate binding site. Residue H62 participates in Zn(2+) binding. Residue E64 is the Proton donor of the active site. The Zn(2+) site is built by C91 and C94. D155 lines the substrate pocket.

Belongs to the cytidine and deoxycytidylate deaminase family. As to quaternary structure, homodimer. The cofactor is Zn(2+).

The protein resides in the cytoplasm. It localises to the nucleus. It catalyses the reaction cytosine + H2O + H(+) = uracil + NH4(+). Its pathway is pyrimidine metabolism; UMP biosynthesis via salvage pathway; uracil from cytosine: step 1/1. In terms of biological role, catalyzes the hydrolytic deamination of cytosine to uracil or 5-methylcytosine to thymine. Is involved in the pyrimidine salvage pathway, which allows the cell to utilize cytosine for pyrimidine nucleotide synthesis. This chain is Cytosine deaminase, found in Saccharomyces cerevisiae (strain ATCC 204508 / S288c) (Baker's yeast).